The sequence spans 419 residues: D-galactonate dehydratase family member SEN1436 (419 aa).

The substrate site is built by Gln45 and His129. Residue Tyr160 is the Proton donor/acceptor of the active site. Mg(2+) is bound at residue Asp225. His227 acts as the Proton donor/acceptor in catalysis. Mg(2+) contacts are provided by Glu251 and Glu277. Substrate-binding residues include Glu277, Arg298, His327, Asp331, and Glu354.

This sequence belongs to the mandelate racemase/muconate lactonizing enzyme family. GalD subfamily. As to quaternary structure, homotetramer. The cofactor is Mg(2+).

It carries out the reaction D-gluconate = 2-dehydro-3-deoxy-D-gluconate + H2O. In terms of biological role, has low D-gluconate dehydratase activity (in vitro), suggesting that it has no significant role in D-gluconate degradation in vivo. Has no detectable activity with a panel of 70 other acid sugars (in vitro). This chain is D-galactonate dehydratase family member SEN1436, found in Salmonella enteritidis PT4 (strain P125109).